We begin with the raw amino-acid sequence, 124 residues long: Small ribosomal subunit protein uS13 (124 aa).

Residues 95–124 (GLPVRGQRTHTNARTRKGPRRSVMGKRKKA) are disordered.

This sequence belongs to the universal ribosomal protein uS13 family. As to quaternary structure, part of the 30S ribosomal subunit. Forms a loose heterodimer with protein S19. Forms two bridges to the 50S subunit in the 70S ribosome.

Its function is as follows. Located at the top of the head of the 30S subunit, it contacts several helices of the 16S rRNA. In the 70S ribosome it contacts the 23S rRNA (bridge B1a) and protein L5 of the 50S subunit (bridge B1b), connecting the 2 subunits; these bridges are implicated in subunit movement. Contacts the tRNAs in the A and P-sites. This Syntrophobacter fumaroxidans (strain DSM 10017 / MPOB) protein is Small ribosomal subunit protein uS13.